The sequence spans 556 residues: Carotenoid-cleaving dioxygenase, mitochondrial (556 aa).

Fe cation is bound by residues His-203, His-263, His-334, and His-550.

The protein belongs to the carotenoid oxygenase family. Fe(2+) serves as cofactor.

It is found in the mitochondrion. The enzyme catalyses all-trans-beta-carotene + O2 = beta-ionone + all-trans-10'-apo-beta-carotenal. It carries out the reaction 5-cis-lycopene + O2 = 5-cis-10'-apo-lycopenal + (3E,5E)-6,10-dimethylundeca-3,5,9-trien-2-one. It catalyses the reaction 13-cis-lycopene + O2 = 13-cis-10'-apo-lycopenal + (3E,5E)-6,10-dimethylundeca-3,5,9-trien-2-one. The catalysed reaction is lutein + O2 = (3R,6R)-hydroxy-alpha-ionone + (3R)-3-hydroxy-10'-apo-beta-carotenal. The enzyme catalyses lutein + O2 = (3R,6R)-3-hydroxy-10'-apo-alpha-carotenal + (3R)-hydroxy-beta-ionone. It carries out the reaction all-trans-zeaxanthin + 2 O2 = 4,9-dimethyldodeca-2,4,6,8,10-pentaenedial + 2 (3R)-hydroxy-beta-ionone. It catalyses the reaction all-trans-zeaxanthin + O2 = (3R)-3-hydroxy-10'-apo-beta-carotenal + (3R)-hydroxy-beta-ionone. The catalysed reaction is beta-cryptoxanthin + O2 = all-trans-10'-apo-beta-carotenal + (3R)-hydroxy-beta-ionone. The enzyme catalyses all-trans-10'-apo-beta-carotenal + O2 = beta-ionone + 4,9-dimethyldodeca-2,4,6,8,10-pentaenedial. It carries out the reaction (3R)-3-hydroxy-10'-apo-beta-carotenal + O2 = 4,9-dimethyldodeca-2,4,6,8,10-pentaenedial + (3R)-hydroxy-beta-ionone. It catalyses the reaction (3R,6R)-3-hydroxy-10'-apo-alpha-carotenal + O2 = (3R,6R)-hydroxy-alpha-ionone + 4,9-dimethyldodeca-2,4,6,8,10-pentaenedial. Broad specificity mitochondrial dioxygenase that mediates the asymmetric oxidative cleavage of carotenoids. Cleaves carotenes (pure hydrocarbon carotenoids) such as all-trans-beta-carotene and lycopene as well as xanthophylls (oxygenated carotenoids) such as zeaxanthin, lutein and beta-cryptoxanthin at both the 9,10 and the 9',10' carbon-carbon double bond. Through its function in carotenoids metabolism regulates oxidative stress and the production of important signaling molecules. The sequence is that of Carotenoid-cleaving dioxygenase, mitochondrial from Macaca fascicularis (Crab-eating macaque).